The sequence spans 176 residues: MGSSKDSASVTNISVEEHFSVSQSSPGGQFVGPTEEISTAAEALIGRSTTLTEALKAASMNVGHKPVETTDVAAIKEVETRAIGGDIESEGGVTAVASKAVARNQKIGKDNEKTNLGDVIAEIDVKVTRDREVTSEDAEAVIRAELNHSPFNNIIPGGVAESVAAAYKLNHDPSSL.

SMP domains lie at 49-106 (TTLT…RNQK) and 115-171 (NLGD…KLNH).

Belongs to the LEA type SMP family.

It localises to the cytoplasm. The protein localises to the nucleus. LEA proteins are late embryonic proteins abundant in higher plant seed embryos. The function of those proteins is not known. This chain is Late embryogenesis abundant protein 49, found in Arabidopsis thaliana (Mouse-ear cress).